The chain runs to 153 residues: Protein SprT-like (153 aa).

A SprT-like domain is found at 6-148; it reads LQQLTEQLSL…CGKCGGKIKE (143 aa). Position 67 (His-67) interacts with Zn(2+). Residue Glu-68 is part of the active site. A Zn(2+)-binding site is contributed by His-71.

This sequence belongs to the SprT family. Zn(2+) serves as cofactor.

The protein localises to the cytoplasm. This is Protein SprT-like from Bacillus licheniformis (strain ATCC 14580 / DSM 13 / JCM 2505 / CCUG 7422 / NBRC 12200 / NCIMB 9375 / NCTC 10341 / NRRL NRS-1264 / Gibson 46).